A 533-amino-acid chain; its full sequence is MASPVADASRRRREKRRQLDARRSKCRIRLGGHMEQWCLLKERLGFSLHSQLAKFLLDRYTSSGCVLCAGPEPVPQKGLQYLVLLSHTHSRECSLVPGLRGPGGGEGELVWECSAGHTFSWEPSLIPTPSEVPKQAPLTHTTERTWCSEARRKQEAEGLECEHRERTQETRLSRRVEPPLETDPSVGEDQVVEEEEEEEEEEEEEELLSDASPWTYSSSPDDSEPDVPRPPPSPVTHTPKEGEIPPVPATLPTPCAVLASLGSTAALTSDTEVQMELSRTSQVPAELQMTESLDSPGSQAQSAPNPTCDEDTAQIGLRRIRKAAKRELMPCDFPGCGRIFSNRQYLNHHKKYQHIHQKSFCCPEPACGKSFNFKKHLKEHVKLHSDARDYICEFCARSFRTSSNLVIHRRIHTGEKPLQCEICGFTCRQKASLNWHRRKHAETAAALRFPCEFCGKRFEKPDSVVAHCSKSHPALLPVQESPGSLGSSPSISAPEPLQSPEGTSFSTSYDSNPAPSTSISSPGVPAPRNTEKS.

Disordered stretches follow at residues 124 to 251 (SLIP…PATL) and 290 to 310 (TESL…TCDE). The segment covering 149-178 (EARRKQEAEGLECEHRERTQETRLSRRVEP) has biased composition (basic and acidic residues). The span at 190-208 (QVVEEEEEEEEEEEEEELL) shows a compositional bias: acidic residues. Serine 233 is subject to Phosphoserine. Residues 290 to 305 (TESLDSPGSQAQSAPN) show a composition bias toward polar residues. C2H2-type zinc fingers lie at residues 329–354 (MPCD…KYQH), 360–384 (FCCP…VKLH), 390–412 (YICE…RRIH), 418–440 (LQCE…RRKH), and 449–472 (FPCE…SKSH). Position 471 is a phosphoserine (serine 471). The tract at residues 478-533 (VQESPGSLGSSPSISAPEPLQSPEGTSFSTSYDSNPAPSTSISSPGVPAPRNTEKS) is disordered. Over residues 481 to 492 (SPGSLGSSPSIS) the composition is skewed to low complexity. The span at 500-521 (PEGTSFSTSYDSNPAPSTSISS) shows a compositional bias: polar residues.

Belongs to the krueppel C2H2-type zinc-finger protein family. In terms of processing, phosphorylation at Ser-471 results in loss of DNA-binding activity.

It localises to the nucleus. May act as an transcriptional repressor for PCK1 gene expression, in turns may participate in the hepatic gluconeogenesis regulation through the activated AMPK signaling pathway. This is Zinc finger protein 692 from Rattus norvegicus (Rat).